Here is a 421-residue protein sequence, read N- to C-terminus: Cytochrome c biogenesis protein Ccs1 (421 aa).

3 helical membrane-spanning segments follow: residues 12 to 32 (LRFA…GTVI), 71 to 91 (TWWF…CTIL), and 157 to 177 (IAPI…IFGA).

Belongs to the Ccs1/CcsB family. As to quaternary structure, may interact with CcsA.

The protein localises to the plastid. Its subcellular location is the chloroplast thylakoid membrane. Its function is as follows. Required during biogenesis of c-type cytochromes (cytochrome c6 and cytochrome f) at the step of heme attachment. The chain is Cytochrome c biogenesis protein Ccs1 from Trieres chinensis (Marine centric diatom).